The sequence spans 288 residues: Light-independent protochlorophyllide reductase iron-sulfur ATP-binding protein (288 aa).

ATP contacts are provided by residues 12-17 (GIGKST) and lysine 41. Serine 16 is a binding site for Mg(2+). Positions 97 and 131 each coordinate [4Fe-4S] cluster. 182–183 (NR) contributes to the ATP binding site.

The protein belongs to the NifH/BchL/ChlL family. Homodimer. Protochlorophyllide reductase is composed of three subunits; ChlL, ChlN and ChlB. The cofactor is [4Fe-4S] cluster.

The catalysed reaction is chlorophyllide a + oxidized 2[4Fe-4S]-[ferredoxin] + 2 ADP + 2 phosphate = protochlorophyllide a + reduced 2[4Fe-4S]-[ferredoxin] + 2 ATP + 2 H2O. Its pathway is porphyrin-containing compound metabolism; chlorophyll biosynthesis (light-independent). In terms of biological role, component of the dark-operative protochlorophyllide reductase (DPOR) that uses Mg-ATP and reduced ferredoxin to reduce ring D of protochlorophyllide (Pchlide) to form chlorophyllide a (Chlide). This reaction is light-independent. The L component serves as a unique electron donor to the NB-component of the complex, and binds Mg-ATP. In Synechocystis sp. (strain ATCC 27184 / PCC 6803 / Kazusa), this protein is Light-independent protochlorophyllide reductase iron-sulfur ATP-binding protein.